The following is a 387-amino-acid chain: Putative serine/threonine-protein kinase (387 aa).

Positions 15–344 (YQIEKLLNRG…ERVLEGQVEI (330 aa)) constitute a Protein kinase domain. ATP is bound by residues 21-29 (LNRGGMDSY) and Lys55. Asp164 serves as the catalytic Proton acceptor. Transmembrane regions (helical) follow at residues 232–252 (PPNA…MLVG) and 363–383 (SIFT…LLIF).

This sequence belongs to the protein kinase superfamily. Ser/Thr protein kinase family.

The protein localises to the cell membrane. It catalyses the reaction L-seryl-[protein] + ATP = O-phospho-L-seryl-[protein] + ADP + H(+). The enzyme catalyses L-threonyl-[protein] + ATP = O-phospho-L-threonyl-[protein] + ADP + H(+). The protein is Putative serine/threonine-protein kinase of Mycoplasma genitalium (strain ATCC 33530 / DSM 19775 / NCTC 10195 / G37) (Mycoplasmoides genitalium).